We begin with the raw amino-acid sequence, 350 residues long: Purine-rich element-binding protein gamma (350 aa).

2 disordered regions span residues Met1–Glu59 and Gly136–Ser172. Residues Gly9–Gly27 are compositionally biased toward gly residues. Residues Ala47–Glu59 show a composition bias toward polar residues. The DNA-binding element occupies Ser54–Arg296. Residues His137–Ser149 show a composition bias toward basic and acidic residues. Residues Ser163, Ser166, and Ser342 each carry the phosphoserine modification.

This sequence belongs to the PUR DNA-binding protein family. As to expression, isoform 1 is expressed in testis. Isoform 2 is expressed in blastocyst and kidney.

Its subcellular location is the nucleus. This chain is Purine-rich element-binding protein gamma (Purg), found in Mus musculus (Mouse).